Here is a 1453-residue protein sequence, read N- to C-terminus: ABC transporter G family member 34 (1453 aa).

Positions 1–24 are disordered; it reads MLGRDEDLVRTMSGRGSLGSTSHR. One can recognise an ABC transporter 1 domain in the interval 173–446; it reads LGLFHLLPSK…FEYMGFKCPE (274 aa). 206–213 provides a ligand contact to ATP; sequence GPPSSGKT. The ABC transmembrane type-2 1 domain occupies 524–737; it reads DLFKACFDRE…GQTALVINEF (214 aa). 6 helical membrane-spanning segments follow: residues 542–562, 582–602, 621–641, 661–681, 687–707, and 773–793; these read FVYV…MTVY, LFFS…FTVM, FALP…VIWI, LLAY…LGAL, IANS…GFII, and FWIC…CYII. Residues 852–1105 enclose the ABC transporter 2 domain; the sequence is LAFNNVNYYV…LVEYFEAIEG (254 aa). 897–904 contributes to the ATP binding site; sequence GVSGAGKT. In terms of domain architecture, ABC transmembrane type-2 2 spans 1177–1391; the sequence is TQTKACFWKM…TLYGIITSQV (215 aa). Transmembrane regions (helical) follow at residues 1196-1216, 1230-1250, 1289-1309, 1311-1331, 1341-1361, 1366-1386, and 1422-1442; these read YNAI…LLFW, NFFG…AATV, IQTG…WTVV, FFWF…YGMM, IAGI…GFLI, IPIW…LYGI, and FLPV…FAFA.

This sequence belongs to the ABC transporter superfamily. ABCG family. PDR (TC 3.A.1.205) subfamily. Expressed in roots at low levels.

The protein resides in the membrane. Its function is as follows. May be a general defense protein. In Arabidopsis thaliana (Mouse-ear cress), this protein is ABC transporter G family member 34 (ABCG34).